We begin with the raw amino-acid sequence, 126 residues long: Aspartate 1-decarboxylase (126 aa).

The active-site Schiff-base intermediate with substrate; via pyruvic acid is Ser25. Ser25 is modified (pyruvic acid (Ser)). Thr57 provides a ligand contact to substrate. Residue Tyr58 is the Proton donor of the active site. 73 to 75 (GAA) contributes to the substrate binding site.

Belongs to the PanD family. As to quaternary structure, heterooctamer of four alpha and four beta subunits. It depends on pyruvate as a cofactor. Post-translationally, is synthesized initially as an inactive proenzyme, which is activated by self-cleavage at a specific serine bond to produce a beta-subunit with a hydroxyl group at its C-terminus and an alpha-subunit with a pyruvoyl group at its N-terminus.

Its subcellular location is the cytoplasm. The catalysed reaction is L-aspartate + H(+) = beta-alanine + CO2. It participates in cofactor biosynthesis; (R)-pantothenate biosynthesis; beta-alanine from L-aspartate: step 1/1. Catalyzes the pyruvoyl-dependent decarboxylation of aspartate to produce beta-alanine. The sequence is that of Aspartate 1-decarboxylase from Yersinia pseudotuberculosis serotype IB (strain PB1/+).